Consider the following 361-residue polypeptide: Cysteine-rich with EGF-like domain protein 2-B (361 aa).

The first 24 residues, 1–24, serve as a signal peptide directing secretion; sequence MNGSRAWRLAAWLLLCLSCSAAVA. Residues 134-176 form the EGF-like 1 domain; that stretch reads DCLACLGGSERPCHGNGFCSGDGTRSGDGSCRCKAEYTGSFCL. 3 disulfides stabilise this stretch: cysteine 138–cysteine 152, cysteine 146–cysteine 164, and cysteine 166–cysteine 175. Asparagine 188 carries an N-linked (GlcNAc...) asparagine glycan. 2 FU repeats span residues 191–238 and 251–298; these read HAVC…EESP and SFLC…SEKL. The 42-residue stretch at 288–329 folds into the EGF-like 2; calcium-binding domain; sequence DVDECDASEKLCLRENEVCLNTAGSYKCTCSEGFEDKEGNCV. 3 disulfides stabilise this stretch: cysteine 292/cysteine 306, cysteine 299/cysteine 315, and cysteine 317/cysteine 328. Residues 339 to 361 are disordered; sequence ITEGETGTPASDTNILNTAHEDL. Positions 346–355 are enriched in polar residues; sequence TPASDTNILN.

Belongs to the CRELD family.

The protein resides in the secreted. It localises to the endoplasmic reticulum. Its function is as follows. Possible role in neuronal acetylcholine receptor transport. This chain is Cysteine-rich with EGF-like domain protein 2-B (creld2-b), found in Xenopus laevis (African clawed frog).